The sequence spans 728 residues: 1,4-alpha-glucan branching enzyme GlgB (728 aa).

The active-site Nucleophile is the Asp405. Glu458 acts as the Proton donor in catalysis.

It belongs to the glycosyl hydrolase 13 family. GlgB subfamily. Monomer.

The catalysed reaction is Transfers a segment of a (1-&gt;4)-alpha-D-glucan chain to a primary hydroxy group in a similar glucan chain.. It functions in the pathway glycan biosynthesis; glycogen biosynthesis. Its function is as follows. Catalyzes the formation of the alpha-1,6-glucosidic linkages in glycogen by scission of a 1,4-alpha-linked oligosaccharide from growing alpha-1,4-glucan chains and the subsequent attachment of the oligosaccharide to the alpha-1,6 position. The protein is 1,4-alpha-glucan branching enzyme GlgB of Klebsiella pneumoniae subsp. pneumoniae (strain ATCC 700721 / MGH 78578).